The chain runs to 124 residues: Small ribosomal subunit protein uS12 (124 aa).

Aspartate 89 bears the 3-methylthioaspartic acid mark. Positions 105 to 124 (QGVKNRKQARSRYGAKKEKS) are disordered. Residues 108-118 (KNRKQARSRYG) show a composition bias toward basic residues.

It belongs to the universal ribosomal protein uS12 family. Part of the 30S ribosomal subunit. Contacts proteins S8 and S17. May interact with IF1 in the 30S initiation complex.

With S4 and S5 plays an important role in translational accuracy. Functionally, interacts with and stabilizes bases of the 16S rRNA that are involved in tRNA selection in the A site and with the mRNA backbone. Located at the interface of the 30S and 50S subunits, it traverses the body of the 30S subunit contacting proteins on the other side and probably holding the rRNA structure together. The combined cluster of proteins S8, S12 and S17 appears to hold together the shoulder and platform of the 30S subunit. The sequence is that of Small ribosomal subunit protein uS12 from Mycobacteroides abscessus (strain ATCC 19977 / DSM 44196 / CCUG 20993 / CIP 104536 / JCM 13569 / NCTC 13031 / TMC 1543 / L948) (Mycobacterium abscessus).